The sequence spans 174 residues: Adenylosuccinate synthetase (174 aa).

Residues 13-19 (GDEGKGK) and 41-43 (GHT) each bind GTP. Asp14 (proton acceptor) is an active-site residue. 2 residues coordinate Mg(2+): Asp14 and Gly41. IMP contacts are provided by residues 14–17 (DEGK), 39–42 (NAGH), Thr130, and Arg144. The active-site Proton donor is His42.

The protein belongs to the adenylosuccinate synthetase family. Homodimer. Mg(2+) is required as a cofactor.

It is found in the cytoplasm. The enzyme catalyses IMP + L-aspartate + GTP = N(6)-(1,2-dicarboxyethyl)-AMP + GDP + phosphate + 2 H(+). Its pathway is purine metabolism; AMP biosynthesis via de novo pathway; AMP from IMP: step 1/2. Plays an important role in the de novo pathway of purine nucleotide biosynthesis. Catalyzes the first committed step in the biosynthesis of AMP from IMP. The protein is Adenylosuccinate synthetase of Stutzerimonas stutzeri (Pseudomonas stutzeri).